The primary structure comprises 134 residues: Large ribosomal subunit protein eL32 (134 aa).

This sequence belongs to the eukaryotic ribosomal protein eL32 family.

The sequence is that of Large ribosomal subunit protein eL32 (RpL32) from Drosophila bifasciata (Fruit fly).